The sequence spans 334 residues: Protein-methionine-sulfoxide reductase catalytic subunit MsrP (334 aa).

Positions 1–44 (MKKNQFLKESDVTAESVFFMKRRQVLKALGISAAALSLPHAAHA) form a signal peptide, tat-type signal. Mo-molybdopterin is bound by residues Asn-88, 91–92 (YE), Cys-146, Thr-181, Asn-233, Arg-238, and 249–251 (GIK).

Belongs to the MsrP family. In terms of assembly, heterodimer of a catalytic subunit (MsrP) and a heme-binding subunit (MsrQ). Mo-molybdopterin serves as cofactor. In terms of processing, predicted to be exported by the Tat system. The position of the signal peptide cleavage has not been experimentally proven.

Its subcellular location is the periplasm. It catalyses the reaction L-methionyl-[protein] + a quinone + H2O = L-methionyl-(S)-S-oxide-[protein] + a quinol. The catalysed reaction is L-methionyl-[protein] + a quinone + H2O = L-methionyl-(R)-S-oxide-[protein] + a quinol. Functionally, part of the MsrPQ system that repairs oxidized periplasmic proteins containing methionine sulfoxide residues (Met-O), using respiratory chain electrons. Thus protects these proteins from oxidative-stress damage caused by reactive species of oxygen and chlorine generated by the host defense mechanisms. MsrPQ is essential for the maintenance of envelope integrity under bleach stress, rescuing a wide series of structurally unrelated periplasmic proteins from methionine oxidation, including the primary periplasmic chaperone SurA and the lipoprotein Pal. The catalytic subunit MsrP is non-stereospecific, being able to reduce both (R-) and (S-) diastereoisomers of methionine sulfoxide. The polypeptide is Protein-methionine-sulfoxide reductase catalytic subunit MsrP (Escherichia coli O17:K52:H18 (strain UMN026 / ExPEC)).